The chain runs to 277 residues: SPX domain-containing protein 3 (277 aa).

The SPX domain occupies 1–152; it reads MKFGKRLKKQ…GRLLRLPFIE (152 aa).

The polypeptide is SPX domain-containing protein 3 (SPX3) (Oryza sativa subsp. indica (Rice)).